Here is a 198-residue protein sequence, read N- to C-terminus: Peptide methionine sulfoxide reductase MsrA 2 (198 aa).

The active site involves Cys32.

Belongs to the MsrA Met sulfoxide reductase family.

The enzyme catalyses L-methionyl-[protein] + [thioredoxin]-disulfide + H2O = L-methionyl-(S)-S-oxide-[protein] + [thioredoxin]-dithiol. The catalysed reaction is [thioredoxin]-disulfide + L-methionine + H2O = L-methionine (S)-S-oxide + [thioredoxin]-dithiol. Functionally, has an important function as a repair enzyme for proteins that have been inactivated by oxidation. Catalyzes the reversible oxidation-reduction of methionine sulfoxide in proteins to methionine. In Rhizobium meliloti (strain 1021) (Ensifer meliloti), this protein is Peptide methionine sulfoxide reductase MsrA 2 (msrA2).